We begin with the raw amino-acid sequence, 456 residues long: Bifunctional protein GlmU (456 aa).

Positions 1–229 are pyrophosphorylase; sequence MLNNAMSVVI…LSEVEGVNNR (229 aa). Residues 11 to 14, Lys25, Gln76, 81 to 82, 103 to 105, Gly140, Glu154, Asn169, and Asn227 contribute to the UDP-N-acetyl-alpha-D-glucosamine site; these read LAAG, GT, and YGD. Residue Asp105 coordinates Mg(2+). Mg(2+) is bound at residue Asn227. Residues 230–250 are linker; the sequence is LQLSRLERVYQSEQAEKLLLA. The tract at residues 251–456 is N-acetyltransferase; sequence GVMLRDPARF…EGWRRPVKKK (206 aa). Positions 333 and 351 each coordinate UDP-N-acetyl-alpha-D-glucosamine. His363 functions as the Proton acceptor in the catalytic mechanism. The UDP-N-acetyl-alpha-D-glucosamine site is built by Tyr366 and Asn377. Residues Ala380, 386–387, Ser405, Ala423, and Arg440 contribute to the acetyl-CoA site; that span reads NY.

The protein in the N-terminal section; belongs to the N-acetylglucosamine-1-phosphate uridyltransferase family. It in the C-terminal section; belongs to the transferase hexapeptide repeat family. Homotrimer. Mg(2+) is required as a cofactor.

It localises to the cytoplasm. The catalysed reaction is alpha-D-glucosamine 1-phosphate + acetyl-CoA = N-acetyl-alpha-D-glucosamine 1-phosphate + CoA + H(+). It catalyses the reaction N-acetyl-alpha-D-glucosamine 1-phosphate + UTP + H(+) = UDP-N-acetyl-alpha-D-glucosamine + diphosphate. The protein operates within nucleotide-sugar biosynthesis; UDP-N-acetyl-alpha-D-glucosamine biosynthesis; N-acetyl-alpha-D-glucosamine 1-phosphate from alpha-D-glucosamine 6-phosphate (route II): step 2/2. Its pathway is nucleotide-sugar biosynthesis; UDP-N-acetyl-alpha-D-glucosamine biosynthesis; UDP-N-acetyl-alpha-D-glucosamine from N-acetyl-alpha-D-glucosamine 1-phosphate: step 1/1. It participates in bacterial outer membrane biogenesis; LPS lipid A biosynthesis. Its function is as follows. Catalyzes the last two sequential reactions in the de novo biosynthetic pathway for UDP-N-acetylglucosamine (UDP-GlcNAc). The C-terminal domain catalyzes the transfer of acetyl group from acetyl coenzyme A to glucosamine-1-phosphate (GlcN-1-P) to produce N-acetylglucosamine-1-phosphate (GlcNAc-1-P), which is converted into UDP-GlcNAc by the transfer of uridine 5-monophosphate (from uridine 5-triphosphate), a reaction catalyzed by the N-terminal domain. This chain is Bifunctional protein GlmU, found in Escherichia coli O139:H28 (strain E24377A / ETEC).